A 543-amino-acid polypeptide reads, in one-letter code: MFS-type transporter pyvG (543 aa).

Residues 24–71 are disordered; it reads PPTEQQPGFQLPPPYRLAATRTQPQQQQEQEQEQEQAKPATRPPWNEP. N-linked (GlcNAc...) asparagine glycosylation occurs at N94. Helical transmembrane passes span 101 to 121, 141 to 161, 178 to 198, 203 to 223, 230 to 250, 259 to 279, 335 to 355, 374 to 394, 415 to 435, 440 to 460, 476 to 496, and 512 to 532; these read LLVY…VAIF, LGMS…SPLS, IFLL…FLIL, GFFG…VTGL, LYVW…IAGF, WSMW…LFLP, PAIL…YSYF, GLIF…YFAF, LVPA…FAWT, LHWV…SLVI, ASLF…AIMW, and LLAG…WWGP.

Belongs to the major facilitator superfamily. CAR1 family.

The protein resides in the cell membrane. MFS-type transporter; part of the gene cluster that mediates the biosynthesis of pyranoviolin A, a pyranonigrin analog with a C-3 methoxy group. May be involved in the secretion of pyranoviolin A. In Aspergillus violaceofuscus (strain CBS 115571), this protein is MFS-type transporter pyvG.